The following is a 434-amino-acid chain: MPAMSADALRAPSYNVSHLLNAVQSEMNRGSEKGDPSEEGLKVRLDDVELWKKFHKLTNEMIVTKSGRRMFPVLSASIAGLDPNSMYSVLLDFSAADDHRWKYVNGEWIPGGKPDGSPPTTAYIHPDSPNFGAHWMKQAVNFSKVKLSNKLNGSGQVMLNSLHKYEPRIHIIRVGGREKQRLVGSYSFTETRFIAVTAYQNEDITQLKIKYNPFAKAFLDIKDKNDGHDLFDDVHDFQGSKYPQFGGWFLPGSGAFGPTPHQFNPSIGLPSHAGCDRYGGLRSHRTSPYPPPPYHQKYSAAGAGYGAEASAGLSSSISLLAADSWSSLANSTSAASSMPACSQYGSMWPSTAATSGFSHVSSPQSPLPTGLFRNPHPTSSHQHNLASTAHGMAPVASGLPSAAVTTANSSEAHALSQSVMAPGECRASDNAGYL.

A DNA-binding region (T-box) is located at residues leucine 50–aspartate 220. Polar residues-rich tracts occupy residues serine 355–glutamine 364 and histidine 376–leucine 385. A disordered region spans residues serine 355–leucine 385.

As to expression, in the developing embryo, expressed in the mesenchyme founder cells, vegetal plate of the mesenchyme blastula, extending tip of the invaginating archenteron and, later, in the secondary mesenchyme cells.

It is found in the nucleus. Functionally, involved in the transcriptional regulation of genes required for mesoderm differentiation. The protein is T-box transcription factor T homolog of Hemicentrotus pulcherrimus (Sea urchin).